Here is a 127-residue protein sequence, read N- to C-terminus: MSRDAFLGKYLSMAGPDEARNKVFIGVTKINGTILERIKALAERLGIPADAIMVEKAGILVPDVPEGKLNATIKLSKVEISLPERSSIQPPENYTVNSDRWNNQETLLRPLFGVFETLARLIDWLIS.

This is an uncharacterized protein from Archaeoglobus fulgidus (strain ATCC 49558 / DSM 4304 / JCM 9628 / NBRC 100126 / VC-16).